A 108-amino-acid polypeptide reads, in one-letter code: E3 ubiquitin-protein ligase Midline-1 (108 aa).

One can recognise a B30.2/SPRY domain in the interval 1–100 (KSAPKHEWIG…IITGLPIPDH (100 aa)).

Belongs to the TRIM/RBCC family. As to quaternary structure, homodimer or heterodimer with MID2. Interacts with IGBP1.

It localises to the cytoplasm. The protein resides in the cytoskeleton. It carries out the reaction S-ubiquitinyl-[E2 ubiquitin-conjugating enzyme]-L-cysteine + [acceptor protein]-L-lysine = [E2 ubiquitin-conjugating enzyme]-L-cysteine + N(6)-ubiquitinyl-[acceptor protein]-L-lysine.. Functionally, has E3 ubiquitin ligase activity towards IGBP1, promoting its monoubiquitination, which results in deprotection of the catalytic subunit of protein phosphatase PP2A, and its subsequent degradation by polyubiquitination. The sequence is that of E3 ubiquitin-protein ligase Midline-1 (Mid1) from Mus caroli (Ryukyu mouse).